The sequence spans 298 residues: Zinc transport system membrane protein TroC (298 aa).

8 consecutive transmembrane segments (helical) span residues 16–36 (VVLGTLFLGLGSGLVGSFAVL), 41–61 (LFGDAVSHATLPGIVIAFLLT), 68–88 (ILLLGAALSGLVGTVVMLMVM), 97–117 (GAQGIVLGVFLGFGFLLLTHV), 144–164 (VLLIIAMEVVIGLLVLLFWKE), 187–207 (FMLTALIVVAVVVGVQAVGVI), 229–249 (VLCALAALFGGVSGVSGSVVS), and 255–275 (LSTGPVIVLVLTGIALVSIML).

The protein belongs to the ABC-3 integral membrane protein family.

It localises to the cell membrane. Its function is as follows. Part of an ATP-driven transport system TroABCD for zinc. The chain is Zinc transport system membrane protein TroC (troC) from Treponema pallidum (strain Nichols).